The following is a 129-amino-acid chain: Fluoride-specific ion channel FluC 2 (129 aa).

A run of 4 helical transmembrane segments spans residues 4–24 (LDVM…WWIG), 39–59 (TFLI…LFGV), 65–85 (YGTM…TTFS), and 100–120 (GGLA…AAWL). Positions 79 and 82 each coordinate Na(+).

It belongs to the fluoride channel Fluc/FEX (TC 1.A.43) family.

The protein localises to the cell inner membrane. It carries out the reaction fluoride(in) = fluoride(out). With respect to regulation, na(+) is not transported, but it plays an essential structural role and its presence is essential for fluoride channel function. Fluoride-specific ion channel. Important for reducing fluoride concentration in the cell, thus reducing its toxicity. The polypeptide is Fluoride-specific ion channel FluC 2 (Brucella suis biovar 1 (strain 1330)).